The following is a 155-amino-acid chain: Histone H3-like centromeric protein hH3v (155 aa).

Residues 1 to 24 (MPPKKGGVTKSKAVSKKAAAVPTP) are compositionally biased toward low complexity. A disordered region spans residues 1 to 56 (MPPKKGGVTKSKAVSKKAAAVPTPKATPPGRRKSRASSVQPGDPVPQGKKRRYRPG). Residues 45 to 148 (VPQGKKRRYR…IQLARRIRGV (104 aa)) form an H3-like region.

The protein belongs to the histone H3 family. In terms of assembly, component of centromeric nucleosomes, where DNA is wrapped around a histone octamer core. The octamer contains two molecules each of H2A, H2B, hH3v/CENPA and H4 assembled in one hH3v-H4 heterotetramer and two H2A-H2B heterodimers. Interacts with the inner kinetochore. Post-translationally, ubiquitinated. Is degraded through ubiquitin-mediated proteolysis when not protected by its association to the kinetochore.

It localises to the nucleus. The protein resides in the chromosome. Its subcellular location is the centromere. Functionally, histone H3-like nucleosomal protein that is specifically found in centromeric nucleosomes. Replaces conventional H3 in the nucleosome core of centromeric chromatin that serves as an assembly site for the inner kinetochore. Required for recruitment and assembly of kinetochore proteins, mitotic progression and chromosome segregation. May serve as an epigenetic mark that propagates centromere identity through replication and cell division. In Neurospora crassa (strain ATCC 24698 / 74-OR23-1A / CBS 708.71 / DSM 1257 / FGSC 987), this protein is Histone H3-like centromeric protein hH3v (hH3v).